A 142-amino-acid chain; its full sequence is Peptide methionine sulfoxide reductase MsrB (142 aa).

The 124-residue stretch at 2–125 (LKKDKSELTD…NSAAIQFIPY (124 aa)) folds into the MsrB domain. Residue Cys114 is the Nucleophile of the active site.

It belongs to the MsrB Met sulfoxide reductase family.

It catalyses the reaction L-methionyl-[protein] + [thioredoxin]-disulfide + H2O = L-methionyl-(R)-S-oxide-[protein] + [thioredoxin]-dithiol. The protein is Peptide methionine sulfoxide reductase MsrB of Staphylococcus aureus (strain bovine RF122 / ET3-1).